We begin with the raw amino-acid sequence, 923 residues long: Periplasmic nitrate reductase (923 aa).

Residues 1–30 (MNRRDFIKNTAIASAASVAGLSVPSSMLGA) constitute a signal peptide (tat-type signal). The region spanning 34 to 90 (WKWDKAVCRFCGTGCGIMIARKDGKIVATKGDPAAPVNRGLNCIKGYFNAKIMYGED) is the 4Fe-4S Mo/W bis-MGD-type domain. [4Fe-4S] cluster contacts are provided by C41, C44, C48, and C76. Mo-bis(molybdopterin guanine dinucleotide)-binding positions include K78, Q146, N171, C175, 208-215 (WGANMAEM), M416, Q420, N526, 551-552 (SD), K574, D601, and 813-822 (TGRVLEHWHS). W889 contributes to the substrate binding site. Residues N897 and K914 each coordinate Mo-bis(molybdopterin guanine dinucleotide).

Belongs to the prokaryotic molybdopterin-containing oxidoreductase family. NasA/NapA/NarB subfamily. Component of the periplasmic nitrate reductase NapAB complex composed of NapA and NapB. [4Fe-4S] cluster serves as cofactor. Requires Mo-bis(molybdopterin guanine dinucleotide) as cofactor. Predicted to be exported by the Tat system. The position of the signal peptide cleavage has not been experimentally proven.

It is found in the periplasm. It catalyses the reaction 2 Fe(II)-[cytochrome] + nitrate + 2 H(+) = 2 Fe(III)-[cytochrome] + nitrite + H2O. Catalytic subunit of the periplasmic nitrate reductase complex NapAB. Receives electrons from NapB and catalyzes the reduction of nitrate to nitrite. In Campylobacter jejuni subsp. jejuni serotype O:23/36 (strain 81-176), this protein is Periplasmic nitrate reductase.